Reading from the N-terminus, the 34-residue chain is uncharacterized protein (34 aa).

This is an uncharacterized protein from Escherichia coli (Bacteriophage T4).